The primary structure comprises 265 residues: Glutamate racemase (265 aa).

Substrate is bound by residues 12–13 and 44–45; these read DS and YG. Cys-75 acts as the Proton donor/acceptor in catalysis. 76-77 is a substrate binding site; sequence NT. Residue Cys-186 is the Proton donor/acceptor of the active site. Substrate is bound at residue 187-188; the sequence is TH.

Belongs to the aspartate/glutamate racemases family.

It catalyses the reaction L-glutamate = D-glutamate. It functions in the pathway cell wall biogenesis; peptidoglycan biosynthesis. Functionally, provides the (R)-glutamate required for cell wall biosynthesis. The polypeptide is Glutamate racemase (Pseudomonas putida (strain ATCC 47054 / DSM 6125 / CFBP 8728 / NCIMB 11950 / KT2440)).